Consider the following 174-residue polypeptide: Nucleoside-triphosphatase THEP1 (174 aa).

ATP-binding positions include 15–22 (GMPGVGKT) and 102–109 (LAIVDEIG).

The protein belongs to the THEP1 NTPase family.

The catalysed reaction is a ribonucleoside 5'-triphosphate + H2O = a ribonucleoside 5'-diphosphate + phosphate + H(+). Its function is as follows. Has nucleotide phosphatase activity towards ATP, GTP, CTP, TTP and UTP. May hydrolyze nucleoside diphosphates with lower efficiency. The polypeptide is Nucleoside-triphosphatase THEP1 (Pyrobaculum islandicum (strain DSM 4184 / JCM 9189 / GEO3)).